The sequence spans 488 residues: GTPase Der (488 aa).

2 consecutive EngA-type G domains span residues 3–166 (PVVA…AEAM) and 199–372 (IKLA…DSAT). GTP-binding positions include 9 to 16 (GRPNVGKS), 56 to 60 (DTGGI), 118 to 121 (NKID), 205 to 212 (GKPNVGKS), 252 to 256 (DTAGV), and 317 to 320 (NKWD). Residues 373-457 (RRVSTSMLTR…PIQLRFQEGD (85 aa)) form the KH-like domain.

This sequence belongs to the TRAFAC class TrmE-Era-EngA-EngB-Septin-like GTPase superfamily. EngA (Der) GTPase family. As to quaternary structure, associates with the 50S ribosomal subunit.

Its function is as follows. GTPase that plays an essential role in the late steps of ribosome biogenesis. The chain is GTPase Der from Shewanella sp. (strain ANA-3).